The chain runs to 1378 residues: Protein CLASP-1 (1378 aa).

An HEAT 1 repeat occupies 168–206 (LIPQLCRLTNDPNSEVRDVSTQCLIDLMVYGGKPIVAKI). Disordered stretches follow at residues 231-254 (RGDL…RNSL), 266-325 (IHPS…TRSS), and 590-725 (MLRD…HQTP). Composition is skewed to low complexity over residues 269–283 (SAST…RLST) and 610–619 (NQKQQPNQQN). Composition is skewed to polar residues over residues 620-630 (ISQKFLSQRSA) and 637-648 (IQLSVKPQTTAI). A compositionally biased stretch (low complexity) spans 664 to 676 (SSTSTSFSAVRSS). Over residues 677 to 690 (GYGQNQSTTPNRAK) the composition is skewed to polar residues. The segment covering 704–721 (TNGNNNNKSSSSSPSTST) has biased composition (low complexity). A coiled-coil region spans residues 740-767 (ASLTQEQANCLQNAMNTAKDEMSKNNED). Over residues 775–784 (IRKTPPKEVP) the composition is skewed to basic and acidic residues. A disordered region spans residues 775–823 (IRKTPPKEVPRSYNNSPFKPSNLDSSVHRSYNNNSPFRPSSGSVGSGSN). Polar residues predominate over residues 786–812 (SYNNSPFKPSNLDSSVHRSYNNNSPFR). One copy of the HEAT 2 repeat lies at 1305 to 1341 (HLIVNDVAPCFVTAYESMSSTVRKCAVFGLVALVQRV).

This sequence belongs to the CLASP family.

Its subcellular location is the cytoplasm. It is found in the cytoskeleton. Microtubule plus-end tracking protein that promotes the stabilization of dynamic microtubules. Operates redundantly with cls-2 and cls-3 in regulating microtubule processes which position the spindle during asymmetric cell division. This chain is Protein CLASP-1 (cls-1), found in Caenorhabditis elegans.